We begin with the raw amino-acid sequence, 214 residues long: Pyridoxine/pyridoxamine 5'-phosphate oxidase (214 aa).

Substrate-binding positions include 8 to 11 and Lys66; that span reads RINY. FMN-binding positions include 61–66, 76–77, Arg82, Lys83, and Gln105; these read RIVLIK and FT. Positions 123, 127, and 131 each coordinate substrate. FMN is bound by residues 140 to 141 and Trp184; that span reads QS. 190–192 lines the substrate pocket; that stretch reads RLH. Arg194 is an FMN binding site.

This sequence belongs to the pyridoxamine 5'-phosphate oxidase family. As to quaternary structure, homodimer. FMN is required as a cofactor.

It carries out the reaction pyridoxamine 5'-phosphate + O2 + H2O = pyridoxal 5'-phosphate + H2O2 + NH4(+). It catalyses the reaction pyridoxine 5'-phosphate + O2 = pyridoxal 5'-phosphate + H2O2. It functions in the pathway cofactor metabolism; pyridoxal 5'-phosphate salvage; pyridoxal 5'-phosphate from pyridoxamine 5'-phosphate: step 1/1. It participates in cofactor metabolism; pyridoxal 5'-phosphate salvage; pyridoxal 5'-phosphate from pyridoxine 5'-phosphate: step 1/1. Its function is as follows. Catalyzes the oxidation of either pyridoxine 5'-phosphate (PNP) or pyridoxamine 5'-phosphate (PMP) into pyridoxal 5'-phosphate (PLP). The sequence is that of Pyridoxine/pyridoxamine 5'-phosphate oxidase from Burkholderia lata (strain ATCC 17760 / DSM 23089 / LMG 22485 / NCIMB 9086 / R18194 / 383).